Consider the following 524-residue polypeptide: Cytochrome P450 monooxygenase patH (524 aa).

Residues methionine 1–methionine 4 lie on the Cytoplasmic side of the membrane. A helical membrane pass occupies residues leucine 5 to valine 23. The Lumenal portion of the chain corresponds to tyrosine 24–glycine 524. Asparagine 191 carries an N-linked (GlcNAc...) asparagine glycan. Cysteine 442 serves as a coordination point for heme. Asparagine 499 carries N-linked (GlcNAc...) asparagine glycosylation.

This sequence belongs to the cytochrome P450 family. Heme is required as a cofactor.

Its subcellular location is the endoplasmic reticulum membrane. The catalysed reaction is 3-methylphenol + reduced [NADPH--hemoprotein reductase] + O2 = 3-hydroxybenzyl alcohol + oxidized [NADPH--hemoprotein reductase] + H2O + H(+). The protein operates within mycotoxin biosynthesis; patulin biosynthesis. Functionally, cytochrome P450 monooxygenase; part of the gene cluster that mediates the biosynthesis of patulin, an acetate-derived tetraketide mycotoxin produced by several fungal species that shows antimicrobial properties against several bacteria. PatH catalyzes the conversion of m-cresol into m-hydroxybenzyl alcohol. The pathway begins with the synthesis of 6-methylsalicylic acid by the polyketide synthase (PKS) patK via condensation of acetate and malonate units. The 6-methylsalicylic acid decarboxylase patG then catalyzes the decarboxylation of 6-methylsalicylic acid to yield m-cresol (also known as 3-methylphenol). These first reactions occur in the cytosol. The intermediate m-cresol is then transported into the endoplasmic reticulum where the cytochrome P450 monooxygenase patH converts it to m-hydroxybenzyl alcohol, which is further converted to gentisyl alcohol by the cytochrome P450 monooxygenase patI. The oxidoreductases patJ and patO further convert gentisyl alcohol to isoepoxydon in the vacuole. PatN catalyzes then the transformation of isoepoxydon into phyllostine. The cluster protein patF is responsible for the conversion from phyllostine to neopatulin whereas the alcohol dehydrogenase patD converts neopatulin to E-ascladiol. The steps between isoepoxydon and E-ascladiol occur in the cytosol, and E-ascladiol is probably secreted to the extracellular space by one of the cluster-specific transporters patC or patM. Finally, the secreted patulin synthase patE catalyzes the conversion of E-ascladiol to patulin. The sequence is that of Cytochrome P450 monooxygenase patH from Aspergillus clavatus (strain ATCC 1007 / CBS 513.65 / DSM 816 / NCTC 3887 / NRRL 1 / QM 1276 / 107).